Here is a 340-residue protein sequence, read N- to C-terminus: Glycerol-3-phosphate dehydrogenase [NAD(P)+] (340 aa).

Ser-12, Trp-13, and Lys-110 together coordinate NADPH. Sn-glycerol 3-phosphate contacts are provided by Lys-110, Gly-141, and Ser-143. An NADPH-binding site is contributed by Ala-145. Sn-glycerol 3-phosphate contacts are provided by Lys-196, Asp-249, Ser-259, Arg-260, and Asn-261. Catalysis depends on Lys-196, which acts as the Proton acceptor. Arg-260 is an NADPH binding site. Positions 284 and 286 each coordinate NADPH.

This sequence belongs to the NAD-dependent glycerol-3-phosphate dehydrogenase family.

It is found in the cytoplasm. It carries out the reaction sn-glycerol 3-phosphate + NAD(+) = dihydroxyacetone phosphate + NADH + H(+). The enzyme catalyses sn-glycerol 3-phosphate + NADP(+) = dihydroxyacetone phosphate + NADPH + H(+). The protein operates within membrane lipid metabolism; glycerophospholipid metabolism. Its function is as follows. Catalyzes the reduction of the glycolytic intermediate dihydroxyacetone phosphate (DHAP) to sn-glycerol 3-phosphate (G3P), the key precursor for phospholipid synthesis. This Latilactobacillus sakei subsp. sakei (strain 23K) (Lactobacillus sakei subsp. sakei) protein is Glycerol-3-phosphate dehydrogenase [NAD(P)+].